Here is an 816-residue protein sequence, read N- to C-terminus: Phenylalanine--tRNA ligase beta subunit (816 aa).

The 109-residue stretch at 40–148 folds into the tRNA-binding domain; sequence FEELAALKTG…EGMAHGQRFI (109 aa). One can recognise a B5 domain in the interval 401–479; that stretch reads KAVEVQRFSI…RIYGYDNVPT (79 aa). Mg(2+) is bound by residues Asp-457, Asp-463, Glu-466, and Glu-467. An FDX-ACB domain is found at 721–814; that stretch reads PVYPAVKRDI…LTDRFGGSFR (94 aa).

Belongs to the phenylalanyl-tRNA synthetase beta subunit family. Type 1 subfamily. In terms of assembly, tetramer of two alpha and two beta subunits. The cofactor is Mg(2+).

Its subcellular location is the cytoplasm. It catalyses the reaction tRNA(Phe) + L-phenylalanine + ATP = L-phenylalanyl-tRNA(Phe) + AMP + diphosphate + H(+). This is Phenylalanine--tRNA ligase beta subunit from Desulfotalea psychrophila (strain LSv54 / DSM 12343).